We begin with the raw amino-acid sequence, 260 residues long: Late transcription factor 1 (260 aa).

Belongs to the chordopoxvirinae VLTF-1 family. Interacts with the late transcription factors VLTF-2 and VLTF-3. Interacts with the late transcription elongation factor VLTF-4. Interacts with itself.

Functionally, associates with RNA polymerase to initiate transcription from late gene promoters. The protein is Late transcription factor 1 (OPG093) of Homo sapiens (Human).